The chain runs to 89 residues: Small ribosomal subunit protein uS15 (89 aa).

Residues 1–18 (MSLDTAEKQKLIENHQVH) are compositionally biased toward basic and acidic residues. A disordered region spans residues 1 to 23 (MSLDTAEKQKLIENHQVHPTDTG).

The protein belongs to the universal ribosomal protein uS15 family. In terms of assembly, part of the 30S ribosomal subunit. Forms a bridge to the 50S subunit in the 70S ribosome, contacting the 23S rRNA.

One of the primary rRNA binding proteins, it binds directly to 16S rRNA where it helps nucleate assembly of the platform of the 30S subunit by binding and bridging several RNA helices of the 16S rRNA. Its function is as follows. Forms an intersubunit bridge (bridge B4) with the 23S rRNA of the 50S subunit in the ribosome. The polypeptide is Small ribosomal subunit protein uS15 (Prochlorococcus marinus (strain MIT 9301)).